Reading from the N-terminus, the 212-residue chain is Uridine kinase (212 aa).

13-20 serves as a coordination point for ATP; it reads GASASGKS.

Belongs to the uridine kinase family.

The protein resides in the cytoplasm. The enzyme catalyses uridine + ATP = UMP + ADP + H(+). The catalysed reaction is cytidine + ATP = CMP + ADP + H(+). It functions in the pathway pyrimidine metabolism; CTP biosynthesis via salvage pathway; CTP from cytidine: step 1/3. It participates in pyrimidine metabolism; UMP biosynthesis via salvage pathway; UMP from uridine: step 1/1. In Shewanella amazonensis (strain ATCC BAA-1098 / SB2B), this protein is Uridine kinase.